Here is a 351-residue protein sequence, read N- to C-terminus: Pleckstrin (351 aa).

The PH 1 domain occupies 4 to 101 (KRIREGYLVK…WVRDTKKAIK (98 aa)). K64 is subject to N6-acetyllysine. S113 and S117 each carry phosphoserine. Residues 136–221 (IEKGIKELNL…NPDAFYYFPD (86 aa)) enclose the DEP domain. A PH 2 domain is found at 244–348 (VIIKQGCLLK…WIKAIQVASR (105 aa)).

Its function is as follows. Major protein kinase C substrate of platelets. The polypeptide is Pleckstrin (PLEK) (Canis lupus familiaris (Dog)).